Reading from the N-terminus, the 143-residue chain is Large ribosomal subunit protein uL11 (143 aa).

This sequence belongs to the universal ribosomal protein uL11 family. As to quaternary structure, part of the ribosomal stalk of the 50S ribosomal subunit. Interacts with L10 and the large rRNA to form the base of the stalk. L10 forms an elongated spine to which 2 L12 dimers bind in a sequential fashion forming a pentameric L10(L12)2(L12)2 complex. In terms of processing, one or more lysine residues are methylated.

Functionally, forms part of the ribosomal stalk which helps the ribosome interact with GTP-bound translation factors. This Agrobacterium fabrum (strain C58 / ATCC 33970) (Agrobacterium tumefaciens (strain C58)) protein is Large ribosomal subunit protein uL11.